Consider the following 165-residue polypeptide: Cyclic pyranopterin monophosphate synthase (165 aa).

Substrate contacts are provided by residues 83–85 and 120–121; these read FCH and ME. Asp-135 is an active-site residue.

The protein belongs to the MoaC family. Homohexamer; trimer of dimers.

It carries out the reaction (8S)-3',8-cyclo-7,8-dihydroguanosine 5'-triphosphate = cyclic pyranopterin phosphate + diphosphate. It participates in cofactor biosynthesis; molybdopterin biosynthesis. In terms of biological role, catalyzes the conversion of (8S)-3',8-cyclo-7,8-dihydroguanosine 5'-triphosphate to cyclic pyranopterin monophosphate (cPMP). The chain is Cyclic pyranopterin monophosphate synthase from Xanthomonas axonopodis pv. citri (strain 306).